The chain runs to 208 residues: Uracil phosphoribosyltransferase (208 aa).

5-phospho-alpha-D-ribose 1-diphosphate is bound by residues Arg-78, Arg-103, and 130–138 (DPMLATGGS). Residues Ile-193 and 198–200 (GDA) contribute to the uracil site. Asp-199 lines the 5-phospho-alpha-D-ribose 1-diphosphate pocket.

The protein belongs to the UPRTase family. It depends on Mg(2+) as a cofactor.

It carries out the reaction UMP + diphosphate = 5-phospho-alpha-D-ribose 1-diphosphate + uracil. Its pathway is pyrimidine metabolism; UMP biosynthesis via salvage pathway; UMP from uracil: step 1/1. Its activity is regulated as follows. Allosterically activated by GTP. Functionally, catalyzes the conversion of uracil and 5-phospho-alpha-D-ribose 1-diphosphate (PRPP) to UMP and diphosphate. This chain is Uracil phosphoribosyltransferase, found in Actinobacillus succinogenes (strain ATCC 55618 / DSM 22257 / CCUG 43843 / 130Z).